Consider the following 423-residue polypeptide: Serine hydroxymethyltransferase (423 aa).

Residues Leu-120 and 124-126 each bind (6S)-5,6,7,8-tetrahydrofolate; that span reads GHL. Lys-229 carries the post-translational modification N6-(pyridoxal phosphate)lysine. 353–355 is a binding site for (6S)-5,6,7,8-tetrahydrofolate; it reads SPF.

It belongs to the SHMT family. In terms of assembly, homodimer. Pyridoxal 5'-phosphate is required as a cofactor.

It localises to the cytoplasm. It carries out the reaction (6R)-5,10-methylene-5,6,7,8-tetrahydrofolate + glycine + H2O = (6S)-5,6,7,8-tetrahydrofolate + L-serine. It functions in the pathway one-carbon metabolism; tetrahydrofolate interconversion. The protein operates within amino-acid biosynthesis; glycine biosynthesis; glycine from L-serine: step 1/1. Catalyzes the reversible interconversion of serine and glycine with tetrahydrofolate (THF) serving as the one-carbon carrier. This reaction serves as the major source of one-carbon groups required for the biosynthesis of purines, thymidylate, methionine, and other important biomolecules. Also exhibits THF-independent aldolase activity toward beta-hydroxyamino acids, producing glycine and aldehydes, via a retro-aldol mechanism. This chain is Serine hydroxymethyltransferase, found in Prochlorococcus marinus (strain MIT 9301).